Here is a 91-residue protein sequence, read N- to C-terminus: DNA-directed RNA polymerase subunit omega (91 aa).

This sequence belongs to the RNA polymerase subunit omega family. As to quaternary structure, the RNAP catalytic core consists of 2 alpha, 1 beta, 1 beta' and 1 omega subunit. When a sigma factor is associated with the core the holoenzyme is formed, which can initiate transcription.

It catalyses the reaction RNA(n) + a ribonucleoside 5'-triphosphate = RNA(n+1) + diphosphate. Its function is as follows. Promotes RNA polymerase assembly. Latches the N- and C-terminal regions of the beta' subunit thereby facilitating its interaction with the beta and alpha subunits. This is DNA-directed RNA polymerase subunit omega from Proteus mirabilis (strain HI4320).